Reading from the N-terminus, the 473-residue chain is Bifunctional protein HldE (473 aa).

The tract at residues 1-318 (MKLSMPRFDQ…RAIQREEGSE (318 aa)) is ribokinase. 194 to 197 (NLSE) contacts ATP. Residue Asp-263 is part of the active site. The interval 343-473 (FTNGCFDILH…TAIVEKIRKN (131 aa)) is cytidylyltransferase.

This sequence in the N-terminal section; belongs to the carbohydrate kinase PfkB family. It in the C-terminal section; belongs to the cytidylyltransferase family. As to quaternary structure, homodimer.

It catalyses the reaction D-glycero-beta-D-manno-heptose 7-phosphate + ATP = D-glycero-beta-D-manno-heptose 1,7-bisphosphate + ADP + H(+). The catalysed reaction is D-glycero-beta-D-manno-heptose 1-phosphate + ATP + H(+) = ADP-D-glycero-beta-D-manno-heptose + diphosphate. It functions in the pathway nucleotide-sugar biosynthesis; ADP-L-glycero-beta-D-manno-heptose biosynthesis; ADP-L-glycero-beta-D-manno-heptose from D-glycero-beta-D-manno-heptose 7-phosphate: step 1/4. Its pathway is nucleotide-sugar biosynthesis; ADP-L-glycero-beta-D-manno-heptose biosynthesis; ADP-L-glycero-beta-D-manno-heptose from D-glycero-beta-D-manno-heptose 7-phosphate: step 3/4. Functionally, catalyzes the phosphorylation of D-glycero-D-manno-heptose 7-phosphate at the C-1 position to selectively form D-glycero-beta-D-manno-heptose-1,7-bisphosphate. Catalyzes the ADP transfer from ATP to D-glycero-beta-D-manno-heptose 1-phosphate, yielding ADP-D-glycero-beta-D-manno-heptose. The chain is Bifunctional protein HldE from Pseudomonas putida (strain ATCC 47054 / DSM 6125 / CFBP 8728 / NCIMB 11950 / KT2440).